Here is a 478-residue protein sequence, read N- to C-terminus: Microfibrillar-associated protein 1 (478 aa).

The segment covering 1–20 (MSAATAAAAASGIQSTAGAI) has biased composition (low complexity). Disordered stretches follow at residues 1–276 (MSAA…RRAT) and 456–478 (NEHAGGMRQQFDKPTGSKRKKME). Residues 53–62 (SSEESDDDDF) show a composition bias toward acidic residues. Basic and acidic residues predominate over residues 107 to 128 (DDPRLRRLRQRPVDMEDMERER). Over residues 140–153 (IMESDSEDEEEDEG) the composition is skewed to acidic residues. Residues 160-170 (RGTNKITLASE) show a composition bias toward polar residues. A compositionally biased stretch (acidic residues) spans 171-181 (SDTDAELSDTE). Residues 197 to 212 (QREEEVLQKEDEKQSE) show a composition bias toward basic and acidic residues. Residues 214–231 (SESESSEYEEETESEEDN) show a composition bias toward acidic residues. The interaction with Prp38 stretch occupies residues 229–478 (EDNEPRLKPL…PTGSKRKKME (250 aa)). Positions 245-268 (RATIQEKEREAQKQKQLEAEAKRA) are enriched in basic and acidic residues.

The protein belongs to the MFAP1 family. In terms of assembly, component of the spliceosome B complex. Interacts (via C-terminus) with Prp38.

The protein resides in the nucleus. Its function is as follows. Required for pre-mRNA splicing. This is Microfibrillar-associated protein 1 from Drosophila melanogaster (Fruit fly).